A 62-amino-acid polypeptide reads, in one-letter code: Large ribosomal subunit protein uL30 (62 aa).

This sequence belongs to the universal ribosomal protein uL30 family. Part of the 50S ribosomal subunit.

This Beutenbergia cavernae (strain ATCC BAA-8 / DSM 12333 / CCUG 43141 / JCM 11478 / NBRC 16432 / NCIMB 13614 / HKI 0122) protein is Large ribosomal subunit protein uL30.